A 311-amino-acid polypeptide reads, in one-letter code: MSKILVFGHQNPDSDAIGSSYAFAYLAREAYGLDTEVVALGEPNEETAFVLDYFGVAAPRVITSAKAEGAEQVILTDHNEFQQSVADIAEVEVYGVVDHHRVANFETASPLYMRLEPVGSASSIVYRMFKEHGVEVPKEIAGLMLSGLISDTLLLKSPTTHPTDKVIAPELAELAGVNLEEYGLAMLKAGTNLASKSAEELIDIDAKTFELNGNNVRVAQVNTVDIAEVLERQAEIEAAIEKAIADNGYSDFVLMITDIINSNSEILAIGSNMDKVEAAFNFVLENNHAFLAGAVSRKKQVVPQLTASFSA.

Mn(2+)-binding residues include His9, Asp13, Asp15, Asp77, His99, and Asp151.

This sequence belongs to the PPase class C family. Mn(2+) is required as a cofactor.

The protein localises to the cytoplasm. It carries out the reaction diphosphate + H2O = 2 phosphate + H(+). In Streptococcus sanguinis (strain SK36), this protein is Probable manganese-dependent inorganic pyrophosphatase.